A 583-amino-acid polypeptide reads, in one-letter code: Ribosomal lysine N-methyltransferase 1 (583 aa).

Residues 22 to 274 form the SET domain; that stretch reads EELKFLYTDL…QSRELSNNYG (253 aa). Position 273 (Tyr273) interacts with S-adenosyl-L-methionine. 2 coiled-coil regions span residues 378–407 and 433–459; these read KAEE…KLNS and KGQK…ENKH.

Belongs to the class V-like SAM-binding methyltransferase superfamily. RKM1 family.

It is found in the cytoplasm. It localises to the nucleus. In terms of biological role, S-adenosyl-L-methionine-dependent protein-lysine N-methyltransferase that monomethylates ribosomal protein S18 (RPS18A and RPS18B) at 'Lys-48' and dimethylates ribosomal protein L23 (RPL23A and RPL23B) at 'Lys-106' and 'Lys-110'. The sequence is that of Ribosomal lysine N-methyltransferase 1 from Saccharomyces cerevisiae (strain ATCC 204508 / S288c) (Baker's yeast).